We begin with the raw amino-acid sequence, 110 residues long: MSDTLTRLAQVLEERKGAAADSSYVASLYHKGLNKILEKVGEESVETIIAAKDAAVSGDCSDVIYETADLWFHSMVMLAQLGQHPQAVLDELDRRFGLSGHVEKASRPSA.

It belongs to the PRA-PH family.

Its subcellular location is the cytoplasm. It catalyses the reaction 1-(5-phospho-beta-D-ribosyl)-ATP + H2O = 1-(5-phospho-beta-D-ribosyl)-5'-AMP + diphosphate + H(+). The protein operates within amino-acid biosynthesis; L-histidine biosynthesis; L-histidine from 5-phospho-alpha-D-ribose 1-diphosphate: step 2/9. The chain is Phosphoribosyl-ATP pyrophosphatase from Pseudomonas fluorescens (strain Pf0-1).